Consider the following 962-residue polypeptide: Glycine dehydrogenase (decarboxylating) (962 aa).

An N6-(pyridoxal phosphate)lysine modification is found at lysine 709.

It belongs to the GcvP family. As to quaternary structure, the glycine cleavage system is composed of four proteins: P, T, L and H. The cofactor is pyridoxal 5'-phosphate.

The enzyme catalyses N(6)-[(R)-lipoyl]-L-lysyl-[glycine-cleavage complex H protein] + glycine + H(+) = N(6)-[(R)-S(8)-aminomethyldihydrolipoyl]-L-lysyl-[glycine-cleavage complex H protein] + CO2. Its function is as follows. The glycine cleavage system catalyzes the degradation of glycine. The P protein binds the alpha-amino group of glycine through its pyridoxal phosphate cofactor; CO(2) is released and the remaining methylamine moiety is then transferred to the lipoamide cofactor of the H protein. The polypeptide is Glycine dehydrogenase (decarboxylating) (Shewanella oneidensis (strain ATCC 700550 / JCM 31522 / CIP 106686 / LMG 19005 / NCIMB 14063 / MR-1)).